The chain runs to 211 residues: Protein-methionine-sulfoxide reductase heme-binding subunit MsrQ (211 aa).

6 helical membrane passes run 10–30 (WLKV…VWAI), 54–74 (FLLA…PLLI), 82–102 (LWCF…ELGV), 116–136 (PYLT…FTST), 153–173 (FVYL…KIIS), and 178–198 (IYAG…LSLF).

The protein belongs to the MsrQ family. In terms of assembly, heterodimer of a catalytic subunit (MsrP) and a heme-binding subunit (MsrQ). The cofactor is FMN. It depends on heme b as a cofactor.

Its subcellular location is the cell inner membrane. Part of the MsrPQ system that repairs oxidized periplasmic proteins containing methionine sulfoxide residues (Met-O), using respiratory chain electrons. Thus protects these proteins from oxidative-stress damage caused by reactive species of oxygen and chlorine generated by the host defense mechanisms. MsrPQ is essential for the maintenance of envelope integrity under bleach stress, rescuing a wide series of structurally unrelated periplasmic proteins from methionine oxidation, including the primary periplasmic chaperone SurA and the lipoprotein Pal. MsrQ provides electrons for reduction to the reductase catalytic subunit MsrP, using the quinone pool of the respiratory chain. The polypeptide is Protein-methionine-sulfoxide reductase heme-binding subunit MsrQ (Escherichia coli O6:H1 (strain CFT073 / ATCC 700928 / UPEC)).